A 239-amino-acid chain; its full sequence is DNA repair protein RecO (239 aa).

Belongs to the RecO family.

Its function is as follows. Involved in DNA repair and RecF pathway recombination. In Bifidobacterium longum subsp. infantis (strain ATCC 15697 / DSM 20088 / JCM 1222 / NCTC 11817 / S12), this protein is DNA repair protein RecO.